A 116-amino-acid chain; its full sequence is Large ribosomal subunit protein bL20 (116 aa).

The protein belongs to the bacterial ribosomal protein bL20 family.

Functionally, binds directly to 23S ribosomal RNA and is necessary for the in vitro assembly process of the 50S ribosomal subunit. It is not involved in the protein synthesizing functions of that subunit. This is Large ribosomal subunit protein bL20 from Nitratiruptor sp. (strain SB155-2).